A 211-amino-acid chain; its full sequence is Large ribosomal subunit protein uL4 (211 aa).

A compositionally biased stretch (polar residues) spans 41 to 53 (QAHSRQGTASTLT). A disordered region spans residues 41–78 (QAHSRQGTASTLTRAEVRGGGRKPYKQKGTGRARQGTI). The span at 60–71 (GGRKPYKQKGTG) shows a compositional bias: basic residues.

The protein belongs to the universal ribosomal protein uL4 family. Part of the 50S ribosomal subunit.

Its function is as follows. One of the primary rRNA binding proteins, this protein initially binds near the 5'-end of the 23S rRNA. It is important during the early stages of 50S assembly. It makes multiple contacts with different domains of the 23S rRNA in the assembled 50S subunit and ribosome. In terms of biological role, forms part of the polypeptide exit tunnel. The protein is Large ribosomal subunit protein uL4 of Prochlorococcus marinus (strain MIT 9303).